The chain runs to 486 residues: Glutamate--tRNA ligase (486 aa).

A 'HIGH' region motif is present at residues 11-21 (PSPTGVVHIGN). The short motif at 255-259 (KLSKR) is the 'KMSKS' region element. An ATP-binding site is contributed by lysine 258.

This sequence belongs to the class-I aminoacyl-tRNA synthetase family. Glutamate--tRNA ligase type 1 subfamily. As to quaternary structure, monomer.

The protein resides in the cytoplasm. It catalyses the reaction tRNA(Glu) + L-glutamate + ATP = L-glutamyl-tRNA(Glu) + AMP + diphosphate. Its function is as follows. Catalyzes the attachment of glutamate to tRNA(Glu) in a two-step reaction: glutamate is first activated by ATP to form Glu-AMP and then transferred to the acceptor end of tRNA(Glu). The polypeptide is Glutamate--tRNA ligase (Streptococcus pneumoniae (strain CGSP14)).